Consider the following 316-residue polypeptide: Ribosomal RNA small subunit methyltransferase A (316 aa).

The S-adenosyl-L-methionine site is built by Asn33, Val35, Gly60, Glu81, Asp110, and Asn133.

It belongs to the class I-like SAM-binding methyltransferase superfamily. rRNA adenine N(6)-methyltransferase family. RsmA subfamily.

It localises to the cytoplasm. The enzyme catalyses adenosine(1518)/adenosine(1519) in 16S rRNA + 4 S-adenosyl-L-methionine = N(6)-dimethyladenosine(1518)/N(6)-dimethyladenosine(1519) in 16S rRNA + 4 S-adenosyl-L-homocysteine + 4 H(+). In terms of biological role, specifically dimethylates two adjacent adenosines (A1518 and A1519) in the loop of a conserved hairpin near the 3'-end of 16S rRNA in the 30S particle. May play a critical role in biogenesis of 30S subunits. The chain is Ribosomal RNA small subunit methyltransferase A from Corynebacterium jeikeium (strain K411).